A 311-amino-acid polypeptide reads, in one-letter code: Porphobilinogen deaminase (311 aa).

Cysteine 241 is modified (S-(dipyrrolylmethanemethyl)cysteine).

It belongs to the HMBS family. In terms of assembly, monomer. The cofactor is dipyrromethane.

It carries out the reaction 4 porphobilinogen + H2O = hydroxymethylbilane + 4 NH4(+). Its pathway is porphyrin-containing compound metabolism; protoporphyrin-IX biosynthesis; coproporphyrinogen-III from 5-aminolevulinate: step 2/4. Its function is as follows. Tetrapolymerization of the monopyrrole PBG into the hydroxymethylbilane pre-uroporphyrinogen in several discrete steps. The sequence is that of Porphobilinogen deaminase (hemC) from Halalkalibacterium halodurans (strain ATCC BAA-125 / DSM 18197 / FERM 7344 / JCM 9153 / C-125) (Bacillus halodurans).